We begin with the raw amino-acid sequence, 336 residues long: Geranylgeranyl pyrophosphate synthase 6, mitochondrial (336 aa).

The transit peptide at 1–22 directs the protein to the mitochondrion; the sequence is MRPRYSLILSAMRLIRPSNRRL. Lysine 80, arginine 83, and histidine 112 together coordinate isopentenyl diphosphate. Aspartate 119 and aspartate 125 together coordinate Mg(2+). Residue arginine 130 coordinates dimethylallyl diphosphate. Arginine 131 contributes to the isopentenyl diphosphate binding site. Positions 221, 222, 259, 276, and 286 each coordinate dimethylallyl diphosphate.

It belongs to the FPP/GGPP synthase family. As to quaternary structure, monomer. Mg(2+) serves as cofactor.

Its subcellular location is the mitochondrion. It catalyses the reaction isopentenyl diphosphate + dimethylallyl diphosphate = (2E)-geranyl diphosphate + diphosphate. The enzyme catalyses isopentenyl diphosphate + (2E)-geranyl diphosphate = (2E,6E)-farnesyl diphosphate + diphosphate. It carries out the reaction isopentenyl diphosphate + (2E,6E)-farnesyl diphosphate = (2E,6E,10E)-geranylgeranyl diphosphate + diphosphate. It functions in the pathway isoprenoid biosynthesis; farnesyl diphosphate biosynthesis; farnesyl diphosphate from geranyl diphosphate and isopentenyl diphosphate: step 1/1. The protein operates within isoprenoid biosynthesis; geranyl diphosphate biosynthesis; geranyl diphosphate from dimethylallyl diphosphate and isopentenyl diphosphate: step 1/1. Its pathway is isoprenoid biosynthesis; geranylgeranyl diphosphate biosynthesis; geranylgeranyl diphosphate from farnesyl diphosphate and isopentenyl diphosphate: step 1/1. Catalyzes the trans-addition of the three molecules of IPP onto DMAPP to form geranylgeranyl pyrophosphate. This is Geranylgeranyl pyrophosphate synthase 6, mitochondrial from Arabidopsis thaliana (Mouse-ear cress).